Consider the following 430-residue polypeptide: MSGVRPPIMNGPMHPRPLVALLDGRDCTVEMPILKDVATVAFCDAQSTQEIHEKVLNEAVGALMYHTITLTREDLEKFKALRIIVRIGSGFDNIDIKSAGDLGIAVCNVPAASVEETADSTLCHILNLYRRTTWLHQALREGTRVQSVEQIREVASGAARIRGETLGIIGLGRVGQAVALRAKAFGFNVLFYDPYLSDGIERALGLQRVSTLQDLLFHSDCVTLHCGLNEHNHHLINDFTVKQMRQGAFLVNTARGGLVDEKALAQALKEGRIRGAALDVHESEPFSFSQGPLKDAPNLICTPHAAWYSEQASIEMREEAAREIRRAITGRIPDSLKNCVNKDHLTAATHWASMDPAVVHPELNGAAYSRYPPGVVSVAPTGIPAAVEGIVPSAMSLSHGLPPVAHPPHAPSPGQTVKPEADRDHTTDQL.

The tract at residues 1-59 (MSGVRPPIMNGPMHPRPLVALLDGRDCTVEMPILKDVATVAFCDAQSTQEIHEKVLNEA) is interaction with GLIS2 1. NAD(+)-binding positions include S89, 169–174 (IGLGRV), D193, 226–232 (CGLNEHN), 253–255 (TAR), and D279. R255 is a catalytic residue. Positions 277–349 (ALDVHESEPF…VNKDHLTAAT (73 aa)) are interaction with GLIS2 2. E284 is an active-site residue. S289 is modified (phosphoserine). Residue H304 is the Proton donor of the active site. Positions 398-430 (SHGLPPVAHPPHAPSPGQTVKPEADRDHTTDQL) are disordered. S412 bears the Phosphoserine mark. A Glycyl lysine isopeptide (Lys-Gly) (interchain with G-Cter in SUMO) cross-link involves residue K418. The segment covering 419-430 (PEADRDHTTDQL) has biased composition (basic and acidic residues).

This sequence belongs to the D-isomer specific 2-hydroxyacid dehydrogenase family. As to quaternary structure, homo- or heterodimer. Heterodimer with CTBP2. Interacts with ELK3 (via its PXDLS motif). Interacts with RBBP8 (via its PXDLS motif); the interaction is disrupted by binding to adenovirus E1A. Interacts with PNN, MECOM and ZFHX1B. Interacts with ZNF366 (via PXDLS motif). Interaction with SATB1 (non-acetylated form); the interaction stabilizes its attachment to DNA and promotes transcription repression. Interacts with PRDM16; the interaction represses white adipose tissue (WAT)-specific genes expression. Interacts with GLIS2, HIPK2, FOXP1, FOXP2, HDAC4, HDAC5, HDAC9, NRIP1 and WIZ. Interacts with ZNF217. Interacts with BCL6; the interaction is required for BCL6 transcriptional autoinhibition and inhibition of some BCL6 target genes. Interacts with IKZF4. Interacts with MCRIP1 (unphosphorylated form, via the PXDLS motif); competitively inhibiting CTBP-ZEB1 interaction. Interacts with Bassoon/BSN; this interaction targets and anchors CTBP1 to presynapses. Interacts with SIMC1. Requires NAD(+) as cofactor. In terms of processing, the level of phosphorylation appears to be regulated during the cell cycle. Phosphorylation by HIPK2 on Ser-412 induces proteasomal degradation. ADP-ribosylated; when cells are exposed to brefeldin A. Post-translationally, sumoylation on Lys-418 is promoted by the E3 SUMO-protein ligase CBX4.

It is found in the cytoplasm. The protein resides in the nucleus. The protein localises to the synapse. It localises to the synaptosome. Corepressor targeting diverse transcription regulators such as GLIS2 or BCL6. Has dehydrogenase activity. Involved in controlling the equilibrium between tubular and stacked structures in the Golgi complex. Functions in brown adipose tissue (BAT) differentiation. In Rattus norvegicus (Rat), this protein is C-terminal-binding protein 1 (Ctbp1).